A 397-amino-acid polypeptide reads, in one-letter code: Phosphoglycerate kinase (397 aa).

Substrate-binding positions include 21–23 (DFN), Arg37, 60–63 (HLGR), Arg119, and Arg152. ATP-binding positions include Lys203, Gly294, Glu325, and 354-357 (GGDS).

Belongs to the phosphoglycerate kinase family. Monomer.

The protein resides in the cytoplasm. The catalysed reaction is (2R)-3-phosphoglycerate + ATP = (2R)-3-phospho-glyceroyl phosphate + ADP. Its pathway is carbohydrate degradation; glycolysis; pyruvate from D-glyceraldehyde 3-phosphate: step 2/5. This chain is Phosphoglycerate kinase, found in Chlorobium chlorochromatii (strain CaD3).